The sequence spans 560 residues: NAD(P)H-quinone oxidoreductase chain 4-3 (560 aa).

Transmembrane regions (helical) follow at residues 5–25 (FPWL…IPLL), 35–55 (WYAL…FWHH), 86–106 (ISMP…LAAW), 114–134 (LFYF…VAQD), 135–155 (LLLF…LVSI), 168–188 (FLLY…AMAL), 208–228 (ALEL…LAIF), 242–262 (SAPV…YGLI), 273–293 (HIYF…YGGL), 310–330 (VSHM…GVSG), 331–351 (AMLQ…LAGV), 374–394 (VFAL…MSGF), 417–437 (VMVF…LSML), and 488–508 (VFIA…PKIA).

The protein belongs to the complex I subunit 4 family.

It localises to the cellular thylakoid membrane. The catalysed reaction is a plastoquinone + NADH + (n+1) H(+)(in) = a plastoquinol + NAD(+) + n H(+)(out). The enzyme catalyses a plastoquinone + NADPH + (n+1) H(+)(in) = a plastoquinol + NADP(+) + n H(+)(out). In terms of biological role, NDH-1 shuttles electrons from NAD(P)H, via FMN and iron-sulfur (Fe-S) centers, to quinones in the respiratory chain. The immediate electron acceptor for the enzyme in this species is believed to be plastoquinone. Couples the redox reaction to proton translocation (for every two electrons transferred, four hydrogen ions are translocated across the cytoplasmic membrane), and thus conserves the redox energy in a proton gradient. In Nostoc sp. (strain PCC 7120 / SAG 25.82 / UTEX 2576), this protein is NAD(P)H-quinone oxidoreductase chain 4-3 (ndhD3).